The following is a 284-amino-acid chain: Shikimate dehydrogenase (NADP(+)) (284 aa).

Residues Ser-20–Ser-22 and Ser-67 each bind shikimate. The Proton acceptor role is filled by Lys-71. Residue Asp-83 coordinates NADP(+). Positions 92 and 107 each coordinate shikimate. Residues Gly-129 to Ala-133 and Ile-227 each bind NADP(+). Tyr-229 provides a ligand contact to shikimate. Gly-250 contributes to the NADP(+) binding site.

It belongs to the shikimate dehydrogenase family. In terms of assembly, homodimer.

The enzyme catalyses shikimate + NADP(+) = 3-dehydroshikimate + NADPH + H(+). Its pathway is metabolic intermediate biosynthesis; chorismate biosynthesis; chorismate from D-erythrose 4-phosphate and phosphoenolpyruvate: step 4/7. Its function is as follows. Involved in the biosynthesis of the chorismate, which leads to the biosynthesis of aromatic amino acids. Catalyzes the reversible NADPH linked reduction of 3-dehydroshikimate (DHSA) to yield shikimate (SA). This chain is Shikimate dehydrogenase (NADP(+)), found in Streptococcus pneumoniae (strain CGSP14).